The following is a 363-amino-acid chain: Outer membrane porin F (363 aa).

An N-terminal signal peptide occupies residues M1–A22. Residues A23–K28 form a beta stranded membrane-spanning segment. Position 29 (D29) is a topological domain, periplasmic. A beta stranded transmembrane segment spans residues G30–W45. Over T46 to Q56 the chain is Extracellular. A beta stranded transmembrane segment spans residues T57 to I69. Residues N70–T71 are Periplasmic-facing. The beta stranded transmembrane segment at D72 to K84 threads the bilayer. Residues A85–R99 are Extracellular-facing. The chain crosses the membrane as a beta stranded span at residues L100–A108. Position 109 (E109) is a topological domain, periplasmic. A beta stranded transmembrane segment spans residues V110–R117. Residues N118 to G154 are Extracellular-facing. Residues G155–N161 form a beta stranded membrane-spanning segment. Topologically, residues S162–D169 are periplasmic. The chain crosses the membrane as a beta stranded span at residues G170–N181. The Extracellular portion of the chain corresponds to Q182–G192. A beta stranded membrane pass occupies residues D193 to F203. D204 is a topological domain (periplasmic). The chain crosses the membrane as a beta stranded span at residues G205 to R217. The Extracellular segment spans residues T218–R230. The chain crosses the membrane as a beta stranded span at residues A231–A242. Position 243 (N243) is a topological domain, periplasmic. A beta stranded membrane pass occupies residues N244–N256. The Extracellular portion of the chain corresponds to M257–N272. The beta stranded transmembrane segment at K273–F285 threads the bilayer. Residues D286 to F287 lie on the Periplasmic side of the membrane. A beta stranded transmembrane segment spans residues G288–K301. Over Q302 to L312 the chain is Extracellular. Residues A313 to F324 traverse the membrane as a beta stranded segment. At N325–K326 the chain is on the periplasmic side. Residues N327–F336 form a beta stranded membrane-spanning segment. The Extracellular segment spans residues N337 to D353. Residues Q354 to F363 form a beta stranded membrane-spanning segment.

This sequence belongs to the Gram-negative porin family. In terms of assembly, homotrimer. Forms mixed heterotrimers with OmpC and with PhoE; other mixed heterotrimers with other porins are also probable.

It localises to the cell outer membrane. Functionally, forms pores that allow passive diffusion of small molecules across the outer membrane. The chain is Outer membrane porin F (ompF) from Salmonella typhi.